A 61-amino-acid chain; its full sequence is Small ribosomal subunit protein uS14B (61 aa).

Residues Cys24, Cys27, Cys40, and Cys43 each contribute to the Zn(2+) site.

Belongs to the universal ribosomal protein uS14 family. Zinc-binding uS14 subfamily. Part of the 30S ribosomal subunit. Contacts proteins S3 and S10. The cofactor is Zn(2+).

Its function is as follows. Binds 16S rRNA, required for the assembly of 30S particles and may also be responsible for determining the conformation of the 16S rRNA at the A site. This Ligilactobacillus salivarius (strain UCC118) (Lactobacillus salivarius) protein is Small ribosomal subunit protein uS14B.